A 183-amino-acid chain; its full sequence is NADH-quinone oxidoreductase subunit I (183 aa).

2 4Fe-4S ferredoxin-type domains span residues 71–100 (KRDEQGRENCTACGLCALSCPAEAITMKAA) and 117–146 (EIYEINMLRCIFCGLCEEACPKDAIYLTTS). [4Fe-4S] cluster is bound by residues C80, C83, C86, C90, C126, C129, C132, and C136.

Belongs to the complex I 23 kDa subunit family. In terms of assembly, NDH-1 is composed of 14 different subunits. Subunits NuoA, H, J, K, L, M, N constitute the membrane sector of the complex. [4Fe-4S] cluster serves as cofactor.

The protein localises to the cell inner membrane. The catalysed reaction is a quinone + NADH + 5 H(+)(in) = a quinol + NAD(+) + 4 H(+)(out). In terms of biological role, NDH-1 shuttles electrons from NADH, via FMN and iron-sulfur (Fe-S) centers, to quinones in the respiratory chain. The immediate electron acceptor for the enzyme in this species is believed to be ubiquinone. Couples the redox reaction to proton translocation (for every two electrons transferred, four hydrogen ions are translocated across the cytoplasmic membrane), and thus conserves the redox energy in a proton gradient. The polypeptide is NADH-quinone oxidoreductase subunit I (Flavobacterium psychrophilum (strain ATCC 49511 / DSM 21280 / CIP 103535 / JIP02/86)).